The following is a 323-amino-acid chain: MTGPTCLAVVAGISGVFVFGALFSVAQIYNDISSFADNAHRELGEFKGFANDAWNSMVNHDDATRVARSVFVRRHKKHSQCNCGPQASNCPAGPPGPPGAPGDRGLDGQPGGAGNPGQPGVAGPKSHEQQECIKCPAGSPGPAGAPGAPGPQGPNGQPGHPGQGGSQGPAGPRGPAGDAGAPGQVGAPGNPGQAGRGGQRSHGLPGPSGAPGPQGPSGAPGQPGQSGGQGQQGPAGPAGPDGQPGQPGQDGQAGAPGNDGAPGADAAYCPCPSRSGSSSAVETGAAEQGYRHRAVAARHRNVIRRRVAKKRVVKKKRVVARQA.

Residues Met1–Ile28 form the signal peptide. A compositionally biased stretch (polar residues) spans Gln80 to Asn89. The interval Gln80 to Arg293 is disordered. Triple-helical region stretches follow at residues Gly93 to Lys125, Gly138 to Arg200, and Gly203 to Asp265. The segment covering Gly108 to Gly117 has biased composition (gly residues). A compositionally biased stretch (low complexity) spans Pro136–Pro146. Residues Gly159–Gly168 show a composition bias toward gly residues. Over residues Pro169–Pro191 the composition is skewed to low complexity. A compositionally biased stretch (gly residues) spans Gly224–Gly233. The segment covering Pro234–Ala267 has biased composition (low complexity).

The protein belongs to the cuticular collagen family. As to quaternary structure, collagen polypeptide chains are complexed within the cuticle by disulfide bonds and other types of covalent cross-links.

Its function is as follows. Nematode cuticles are composed largely of collagen-like proteins. The cuticle functions both as an exoskeleton and as a barrier to protect the worm from its environment. This is Cuticle collagen 39 (col-39) from Caenorhabditis elegans.